The sequence spans 368 residues: 3-dehydroquinate synthase (368 aa).

NAD(+) contacts are provided by residues 80 to 85 (DAESAK), 114 to 118 (GAATD), 138 to 139 (TT), lysine 151, and lysine 160. Positions 193, 255, and 271 each coordinate Zn(2+).

Belongs to the sugar phosphate cyclases superfamily. Dehydroquinate synthase family. The cofactor is Co(2+). Zn(2+) is required as a cofactor. NAD(+) serves as cofactor.

The protein localises to the cytoplasm. It catalyses the reaction 7-phospho-2-dehydro-3-deoxy-D-arabino-heptonate = 3-dehydroquinate + phosphate. It functions in the pathway metabolic intermediate biosynthesis; chorismate biosynthesis; chorismate from D-erythrose 4-phosphate and phosphoenolpyruvate: step 2/7. Catalyzes the conversion of 3-deoxy-D-arabino-heptulosonate 7-phosphate (DAHP) to dehydroquinate (DHQ). The protein is 3-dehydroquinate synthase of Corynebacterium jeikeium (strain K411).